A 183-amino-acid chain; its full sequence is Inosine triphosphate pyrophosphatase (183 aa).

Residue 8 to 13 participates in ITP binding; it reads TGNKNK. Position 36 (glutamate 36) interacts with Mg(2+). Residues lysine 48, 64–65, lysine 81, 140–143, lysine 161, and 166–167 each bind ITP; these read DT, FGWD, and HR.

This sequence belongs to the HAM1 NTPase family. As to quaternary structure, homodimer. Requires Mg(2+) as cofactor. Mn(2+) is required as a cofactor.

It localises to the cytoplasm. Its subcellular location is the nucleus. It catalyses the reaction ITP + H2O = IMP + diphosphate + H(+). The catalysed reaction is dITP + H2O = dIMP + diphosphate + H(+). The enzyme catalyses XTP + H2O = XMP + diphosphate + H(+). Pyrophosphatase that hydrolyzes non-canonical purine nucleotides such as inosine triphosphate (ITP), deoxyinosine triphosphate (dITP) or xanthosine 5'-triphosphate (XTP) to their respective monophosphate derivatives. The enzyme does not distinguish between the deoxy- and ribose forms. Probably excludes non-canonical purines from RNA and DNA precursor pools, thus preventing their incorporation into RNA and DNA and avoiding chromosomal lesions. The chain is Inosine triphosphate pyrophosphatase from Ajellomyces capsulatus (strain G186AR / H82 / ATCC MYA-2454 / RMSCC 2432) (Darling's disease fungus).